The chain runs to 149 residues: Large-conductance mechanosensitive channel (149 aa).

3 consecutive transmembrane segments (helical) span residues 10-30 (FALK…GAFA), 41-61 (IMPI…MFLI), and 87-107 (GSFI…FMMV).

It belongs to the MscL family. As to quaternary structure, homopentamer.

Its subcellular location is the cell inner membrane. Functionally, channel that opens in response to stretch forces in the membrane lipid bilayer. May participate in the regulation of osmotic pressure changes within the cell. This chain is Large-conductance mechanosensitive channel, found in Psychrobacter cryohalolentis (strain ATCC BAA-1226 / DSM 17306 / VKM B-2378 / K5).